We begin with the raw amino-acid sequence, 39 residues long: Potassium channel toxin alpha-KTx 31.1 (39 aa).

3 disulfides stabilise this stretch: cysteine 7–cysteine 30, cysteine 13–cysteine 35, and cysteine 17–cysteine 37.

This sequence belongs to the short scorpion toxin superfamily. Potassium channel inhibitor family. Alpha-KTx 31 subfamily. As to expression, expressed by the venom gland.

It is found in the secreted. Functionally, voltage-gated potassium channel inhibitor. 1 uM of the native toxin inhibits rat Kv1.2/KCNA2 (100% inhibition), and drosophila Shaker IR/Sh (100%), human Kv1.3/KCNA3 (83%), rat Kv1.1/KCNA1 (32%) and rat Kv1.6/KCNA6 (21%). The chain is Potassium channel toxin alpha-KTx 31.1 from Buthus occitanus tunetanus (Common European scorpion).